Here is a 1141-residue protein sequence, read N- to C-terminus: Tetratricopeptide repeat protein 17 (1141 aa).

Residues phenylalanine 295 to phenylalanine 328 form a TPR 1 repeat. Residues cysteine 340 to histidine 382 are a coiled coil. TPR repeat units follow at residues tryptophan 619–glutamine 652, proline 689–cysteine 722, serine 1014–glutamine 1048, aspartate 1051–phenylalanine 1084, and alanine 1085–phenylalanine 1118.

It belongs to the TTC17 family. Interacts with CATIP. Expressed in germ cells as well as in somatic cells of the testis (at protein level).

The protein resides in the cytoplasm. It is found in the cell membrane. It localises to the cytoskeleton. Functionally, plays a role in primary ciliogenesis by modulating actin polymerization. This is Tetratricopeptide repeat protein 17 (TTC17) from Homo sapiens (Human).